A 452-amino-acid chain; its full sequence is Trigger factor (452 aa).

A PPIase FKBP-type domain is found at 171-256 (GDRVKVNFKG…ATAIETPEEK (86 aa)).

This sequence belongs to the FKBP-type PPIase family. Tig subfamily.

Its subcellular location is the cytoplasm. The catalysed reaction is [protein]-peptidylproline (omega=180) = [protein]-peptidylproline (omega=0). Its function is as follows. Involved in protein export. Acts as a chaperone by maintaining the newly synthesized protein in an open conformation. Functions as a peptidyl-prolyl cis-trans isomerase. This chain is Trigger factor, found in Bradyrhizobium sp. (strain BTAi1 / ATCC BAA-1182).